Consider the following 274-residue polypeptide: Glycerol uptake facilitator protein (274 aa).

The next 2 membrane-spanning stretches (helical) occupy residues 3-23 and 38-58; these read AFWGEVIGTMLLIIFGAGVCA and IVVVFGWGLGVAMAAYAVGGI. The short motif at 64-66 is the NPA 1 element; the sequence is NPA. 3 consecutive transmembrane segments (helical) span residues 82–102, 131–151, and 164–184; these read VPVYIAAQMIGAIIGAVIIYL, FANVLSEVIGTFVLVLGILAI, and IVGFLIVAIGISLGGTTGYAI. An NPA 2 motif is present at residues 185–187; it reads NPA. The helical transmembrane segment at 238–258 threads the bilayer; the sequence is ITSSFWIVSVILVVVLLGLYV.

The protein belongs to the MIP/aquaporin (TC 1.A.8) family.

Its subcellular location is the cell membrane. The catalysed reaction is glycerol(in) = glycerol(out). In terms of biological role, mediates glycerol diffusion across the cytoplasmic membrane via a pore-type mechanism. The polypeptide is Glycerol uptake facilitator protein (glpF) (Bacillus subtilis (strain 168)).